We begin with the raw amino-acid sequence, 279 residues long: 3-methyl-2-oxobutanoate hydroxymethyltransferase (279 aa).

2 residues coordinate Mg(2+): Asp43 and Asp82. 3-methyl-2-oxobutanoate-binding positions include 43 to 44 (DS), Asp82, and Lys112. A Mg(2+)-binding site is contributed by Glu114. Glu181 (proton acceptor) is an active-site residue.

This sequence belongs to the PanB family. As to quaternary structure, homodecamer; pentamer of dimers. It depends on Mg(2+) as a cofactor.

Its subcellular location is the cytoplasm. The catalysed reaction is 3-methyl-2-oxobutanoate + (6R)-5,10-methylene-5,6,7,8-tetrahydrofolate + H2O = 2-dehydropantoate + (6S)-5,6,7,8-tetrahydrofolate. It functions in the pathway cofactor biosynthesis; (R)-pantothenate biosynthesis; (R)-pantoate from 3-methyl-2-oxobutanoate: step 1/2. Catalyzes the reversible reaction in which hydroxymethyl group from 5,10-methylenetetrahydrofolate is transferred onto alpha-ketoisovalerate to form ketopantoate. In Geobacillus kaustophilus (strain HTA426), this protein is 3-methyl-2-oxobutanoate hydroxymethyltransferase.